Reading from the N-terminus, the 337-residue chain is MDDLKSIIGKVATGAPLSREQAASAFDSMMSGEATPSQMGALLMALRVRGETVEEITGAVSVMRAKMLRVDAPANAVDIVGTGGDGSGSVNVSTCASFIVAGAGVPVAKHGNRALSSRSGAADVLAALGVKIDLKPDQVGRCIREAGIGFMFAPAHHPAMKNVGPTRVELATRTIFNLLGPLSNPAGVKRQMVGVFSRQWVEPLAQVLKNLGSGAAWVVHGSDGLDEITLTGPTFVAALENGHIRTFEISPEEAGLGLCDSEGLKGGDAAANAVALQSVLDGLPSPYRDVALLNAAAALVVAGRAKSLKEGVAIGKDSLDSGAAAGRLKQLIAVSNS.

5-phospho-alpha-D-ribose 1-diphosphate contacts are provided by residues Gly-81, 84-85, Ser-89, 91-94, 109-117, and Ala-121; these read GD, NVST, and KHGNRALSS. Gly-81 is an anthranilate binding site. A Mg(2+)-binding site is contributed by Ser-93. Asn-112 is an anthranilate binding site. An anthranilate-binding site is contributed by Arg-167. 2 residues coordinate Mg(2+): Asp-226 and Glu-227.

This sequence belongs to the anthranilate phosphoribosyltransferase family. As to quaternary structure, homodimer. It depends on Mg(2+) as a cofactor.

It catalyses the reaction N-(5-phospho-beta-D-ribosyl)anthranilate + diphosphate = 5-phospho-alpha-D-ribose 1-diphosphate + anthranilate. It participates in amino-acid biosynthesis; L-tryptophan biosynthesis; L-tryptophan from chorismate: step 2/5. Functionally, catalyzes the transfer of the phosphoribosyl group of 5-phosphorylribose-1-pyrophosphate (PRPP) to anthranilate to yield N-(5'-phosphoribosyl)-anthranilate (PRA). This chain is Anthranilate phosphoribosyltransferase, found in Bradyrhizobium sp. (strain ORS 278).